Here is a 462-residue protein sequence, read N- to C-terminus: GTPase Der (462 aa).

EngA-type G domains are found at residues 2-164 (QKVI…EEKV) and 198-369 (IRVG…KNYT). GTP is bound by residues 8-15 (GKPNVGKS), 55-59 (DSGGL), 116-119 (NKID), 204-211 (GRVNVGKS), 251-255 (DTAGI), and 315-318 (NKWD). Residues 370–454 (QKIQTSKLNE…PIVLIPKKRG (85 aa)) form the KH-like domain.

It belongs to the TRAFAC class TrmE-Era-EngA-EngB-Septin-like GTPase superfamily. EngA (Der) GTPase family. In terms of assembly, associates with the 50S ribosomal subunit.

Functionally, GTPase that plays an essential role in the late steps of ribosome biogenesis. The polypeptide is GTPase Der (Campylobacter concisus (strain 13826)).